The chain runs to 623 residues: Chaperone protein DnaK (623 aa).

Thr-197 carries the phosphothreonine; by autocatalysis modification. The segment covering 595–615 (AENMYKKDEPNTANDKKKKDD) has biased composition (basic and acidic residues). The segment at 595–623 (AENMYKKDEPNTANDKKKKDDDVIDAEVE) is disordered.

The protein belongs to the heat shock protein 70 family.

In terms of biological role, acts as a chaperone. This Campylobacter jejuni subsp. doylei (strain ATCC BAA-1458 / RM4099 / 269.97) protein is Chaperone protein DnaK.